The following is a 217-amino-acid chain: Protein-methionine-sulfoxide reductase heme-binding subunit MsrQ (217 aa).

The next 4 helical transmembrane spans lie at 82–102 (MLGL…LLVD), 118–138 (PFIT…ATST), 150–170 (WQWL…HYWW), and 180–200 (EVSI…WWVW).

It belongs to the MsrQ family. In terms of assembly, heterodimer of a catalytic subunit (MsrP) and a heme-binding subunit (MsrQ). Requires FMN as cofactor. Heme b is required as a cofactor.

It localises to the cell inner membrane. Its function is as follows. Part of the MsrPQ system that repairs oxidized periplasmic proteins containing methionine sulfoxide residues (Met-O), using respiratory chain electrons. Thus protects these proteins from oxidative-stress damage caused by reactive species of oxygen and chlorine generated by the host defense mechanisms. MsrPQ is essential for the maintenance of envelope integrity under bleach stress, rescuing a wide series of structurally unrelated periplasmic proteins from methionine oxidation. MsrQ provides electrons for reduction to the reductase catalytic subunit MsrP, using the quinone pool of the respiratory chain. This chain is Protein-methionine-sulfoxide reductase heme-binding subunit MsrQ, found in Ralstonia nicotianae (strain ATCC BAA-1114 / GMI1000) (Ralstonia solanacearum).